We begin with the raw amino-acid sequence, 125 residues long: Glycine cleavage system H protein (125 aa).

Residues glutamate 19–lysine 101 form the Lipoyl-binding domain. Lysine 60 is modified (N6-lipoyllysine).

Belongs to the GcvH family. The glycine cleavage system is composed of four proteins: P, T, L and H. It depends on (R)-lipoate as a cofactor.

Functionally, the glycine cleavage system catalyzes the degradation of glycine. The H protein shuttles the methylamine group of glycine from the P protein to the T protein. In Legionella pneumophila (strain Corby), this protein is Glycine cleavage system H protein.